We begin with the raw amino-acid sequence, 467 residues long: UDP-N-acetylmuramate--L-alanine ligase (467 aa).

Residue 114-120 (GTHGKTT) participates in ATP binding.

The protein belongs to the MurCDEF family.

It is found in the cytoplasm. It catalyses the reaction UDP-N-acetyl-alpha-D-muramate + L-alanine + ATP = UDP-N-acetyl-alpha-D-muramoyl-L-alanine + ADP + phosphate + H(+). Its pathway is cell wall biogenesis; peptidoglycan biosynthesis. In terms of biological role, cell wall formation. In Rhodopseudomonas palustris (strain BisB18), this protein is UDP-N-acetylmuramate--L-alanine ligase.